A 246-amino-acid chain; its full sequence is Large ribosomal subunit protein uL30 (246 aa).

The protein belongs to the universal ribosomal protein uL30 family.

Its function is as follows. Binds to G-rich structures in 28S rRNA and in mRNAs. Plays a regulatory role in the translation apparatus; inhibits cell-free translation of mRNAs. In Dictyostelium discoideum (Social amoeba), this protein is Large ribosomal subunit protein uL30 (rpl7).